The sequence spans 668 residues: UvrABC system protein B (668 aa).

A Helicase ATP-binding domain is found at 36–276; sequence DNIKGGEKAQ…EEAIKNIMEE (241 aa). 49-56 is a binding site for ATP; it reads GATGTGKT. The Beta-hairpin signature appears at 102-125; sequence YYDYYQPEAYVPSSDTYIEKDSSV. One can recognise a Helicase C-terminal domain in the interval 440–606; the sequence is QMDDLLGEIN…TIKKEIRDLI (167 aa). In terms of domain architecture, UVR spans 632–667; sequence QEAIKKLQKQMHEAAELLDFELAAQIRDMVLELKSM.

The protein belongs to the UvrB family. Forms a heterotetramer with UvrA during the search for lesions. Interacts with UvrC in an incision complex.

The protein localises to the cytoplasm. Its function is as follows. The UvrABC repair system catalyzes the recognition and processing of DNA lesions. A damage recognition complex composed of 2 UvrA and 2 UvrB subunits scans DNA for abnormalities. Upon binding of the UvrA(2)B(2) complex to a putative damaged site, the DNA wraps around one UvrB monomer. DNA wrap is dependent on ATP binding by UvrB and probably causes local melting of the DNA helix, facilitating insertion of UvrB beta-hairpin between the DNA strands. Then UvrB probes one DNA strand for the presence of a lesion. If a lesion is found the UvrA subunits dissociate and the UvrB-DNA preincision complex is formed. This complex is subsequently bound by UvrC and the second UvrB is released. If no lesion is found, the DNA wraps around the other UvrB subunit that will check the other stand for damage. This is UvrABC system protein B from Streptococcus thermophilus (strain ATCC BAA-491 / LMD-9).